The chain runs to 406 residues: Beta-galactoside alpha-2,6-sialyltransferase 1 (406 aa).

Residues 1-9 lie on the Cytoplasmic side of the membrane; that stretch reads MIHTNLKKK. A helical; Signal-anchor for type II membrane protein transmembrane segment spans residues 10 to 26; that stretch reads FSCCVLVFLLFAVICVW. At 27–406 the chain is on the lumenal side; it reads KEKKKGSYYD…TLPGFRTIHC (380 aa). 3 disulfides stabilise this stretch: C142/C406, C184/C335, and C353/C364. 2 N-linked (GlcNAc...) asparagine glycosylation sites follow: N149 and N161. Substrate contacts are provided by residues S189, N212, N233, 322 to 324, C353, Y354, T365, Y369, H370, and K376; that span reads SSG. Y369 carries the phosphotyrosine modification.

The protein belongs to the glycosyltransferase 29 family. Monomer and homodimer. In terms of processing, N-glycosylated.

It localises to the golgi apparatus. The protein localises to the golgi stack membrane. The protein resides in the secreted. The catalysed reaction is a beta-D-galactoside + CMP-N-acetyl-beta-neuraminate = an N-acetyl-alpha-neuraminyl-(2-&gt;6)-beta-D-galactosyl derivative + CMP + H(+). It functions in the pathway protein modification; protein glycosylation. Its activity is regulated as follows. Inhibited by CTP. In terms of biological role, transfers sialic acid from CMP-sialic acid to galactose-containing acceptor substrates. In B lymphocytes, generates neuraminidase-sensitive lymphocyte cell-surface differentiation antigens, such as CDw75, HB-6 and CD76. The polypeptide is Beta-galactoside alpha-2,6-sialyltransferase 1 (ST6GAL1) (Homo sapiens (Human)).